A 760-amino-acid chain; its full sequence is ER membrane protein complex subunit 1 (760 aa).

Residues 1 to 24 (MKITCTDLVYVFILLFLNTSCVQA) form the signal peptide. Residues 25-723 (VFSDDAFITD…PSGQFDLMSP (699 aa)) lie on the Lumenal side of the membrane. N-linked (GlcNAc...) asparagine glycans are attached at residues asparagine 73, asparagine 106, asparagine 192, asparagine 202, asparagine 420, asparagine 443, asparagine 574, and asparagine 578. Residues 724-744 (TFEKGKLLITIFVLLVITYFI) form a helical membrane-spanning segment. Residues 745 to 760 (RPSVSNKKLKSQWLIK) lie on the Cytoplasmic side of the membrane.

It belongs to the EMC1 family. Component of the ER membrane protein complex (EMC), which is composed of EMC1, EMC2, EMC3, EMC4, EMC5 and EMC6. In terms of processing, N-glycosylated.

It is found in the endoplasmic reticulum membrane. Its function is as follows. Part of the endoplasmic reticulum membrane protein complex (EMC) that enables the energy-independent insertion into endoplasmic reticulum membranes of newly synthesized membrane proteins. Preferentially accommodates proteins with transmembrane domains that are weakly hydrophobic or contain destabilizing features such as charged and aromatic residues. Involved in the cotranslational insertion of multi-pass membrane proteins in which stop-transfer membrane-anchor sequences become ER membrane spanning helices. It is also required for the post-translational insertion of tail-anchored/TA proteins in endoplasmic reticulum membranes. By mediating the proper cotranslational insertion of N-terminal transmembrane domains in an N-exo topology, with translocated N-terminus in the lumen of the ER, controls the topology of multi-pass membrane proteins. This chain is ER membrane protein complex subunit 1 (EMC1), found in Saccharomyces cerevisiae (strain ATCC 204508 / S288c) (Baker's yeast).